The chain runs to 512 residues: Cytochrome P450 monooxygenase astD (512 aa).

Residues 19 to 39 (MGISILVMLSTFLALGTIFVY) traverse the membrane as a helical segment. Asn-191 and Asn-413 each carry an N-linked (GlcNAc...) asparagine glycan. Heme is bound at residue Cys-449.

Belongs to the cytochrome P450 family. Requires heme as cofactor.

The protein resides in the membrane. It participates in secondary metabolite biosynthesis; terpenoid biosynthesis. In terms of biological role, cytochrome P450 monooxygenase; part of the gene cluster that mediates the biosynthesis of astellolides, drimane-type sesquiterpene esters that show antimicrobial, anti-inflammatory, and anti-tumor activities. The first step in astellolide biosynthesis is performed by the sesquiterpene cyclase astC that catalyzes the formation of drimanyl pyrophosphate from farnesyl pyrophosphate. Drimanyl pyrophosphate is then dephosphorylated by the sesquiterpene phosphatase astI to produce drimanyl monophosphate which is further dephosphorylated to drim-8-ene-11-ol by atsK. Drim-8-ene-11-ol is converted to confertifolin, probably by the cytochrome P450 monooxygenase astD and/or the dehydrogenase astE. The cytochrome P450 monooxygenases astB, astF and astJ then hydroxylate confertifolin at C6, C14, or C15 to form trihydroxy confertifolin. The nonribosomal peptide synthetase astA catalyzes ester bond formation between trihydroxy contifolin and benzoic acid (BA) or 4-hydroxy benzoic acid (4HBA), leading to the formation of dideacetyl astellolides A and B, respectively. Finally, the O-acetyltransferase astG converts dideacetyl astellolides A and B into deacetyl astellolides A and B. In Aspergillus oryzae (strain ATCC 42149 / RIB 40) (Yellow koji mold), this protein is Cytochrome P450 monooxygenase astD.